Consider the following 439-residue polypeptide: Methionine aminopeptidase 2-2 (439 aa).

The segment at Met-1–Pro-90 is disordered. Over residues Glu-10–Pro-23 the composition is skewed to basic and acidic residues. Residues Asp-35–Asp-45 are compositionally biased toward acidic residues. Over residues Ala-54–Asn-68 the composition is skewed to basic residues. His-192 provides a ligand contact to substrate. Residues Asp-212, Asp-223, and His-292 each coordinate a divalent metal cation. His-300 contributes to the substrate binding site. A divalent metal cation contacts are provided by Glu-325 and Glu-420.

This sequence belongs to the peptidase M24A family. Methionine aminopeptidase eukaryotic type 2 subfamily. Requires Co(2+) as cofactor. Zn(2+) is required as a cofactor. Mn(2+) serves as cofactor. It depends on Fe(2+) as a cofactor.

The protein localises to the cytoplasm. It catalyses the reaction Release of N-terminal amino acids, preferentially methionine, from peptides and arylamides.. Cotranslationally removes the N-terminal methionine from nascent proteins. The N-terminal methionine is often cleaved when the second residue in the primary sequence is small and uncharged (Met-Ala-, Cys, Gly, Pro, Ser, Thr, or Val). The sequence is that of Methionine aminopeptidase 2-2 from Chaetomium globosum (strain ATCC 6205 / CBS 148.51 / DSM 1962 / NBRC 6347 / NRRL 1970) (Soil fungus).